A 502-amino-acid polypeptide reads, in one-letter code: Probable malate:quinone oxidoreductase 1 (502 aa).

This sequence belongs to the MQO family. Requires FAD as cofactor.

The catalysed reaction is (S)-malate + a quinone = a quinol + oxaloacetate. The protein operates within carbohydrate metabolism; tricarboxylic acid cycle; oxaloacetate from (S)-malate (quinone route): step 1/1. The sequence is that of Probable malate:quinone oxidoreductase 1 from Pseudomonas putida (strain ATCC 47054 / DSM 6125 / CFBP 8728 / NCIMB 11950 / KT2440).